A 160-amino-acid chain; its full sequence is uncharacterized protein (160 aa).

A Phosphotyrosine modification is found at Y49.

Functionally, may be involved in the assembly, structure, or function of the flagellum. May polymerize to form a filamentous structure that is part of the flagellum. This is an uncharacterized protein from Bacillus subtilis (strain 168).